The sequence spans 233 residues: Nickel import system ATP-binding protein NikE (233 aa).

The ABC transporter domain maps to 2–228 (IELKHVTFGY…DRHSYTKELV (227 aa)). 35–42 (GESGCGKS) is a binding site for ATP.

It belongs to the ABC transporter superfamily. As to quaternary structure, the complex is composed of two ATP-binding proteins (NikD and NikE), two transmembrane proteins (NikB and NikC) and a solute-binding protein (NikA).

It is found in the cell membrane. It catalyses the reaction Ni(2+)(out) + ATP + H2O = Ni(2+)(in) + ADP + phosphate + H(+). In terms of biological role, part of the ABC transporter complex NikABCDE (Opp2) involved in nickel import. Probably responsible for energy coupling to the transport system. The polypeptide is Nickel import system ATP-binding protein NikE (Staphylococcus aureus (strain bovine RF122 / ET3-1)).